The sequence spans 60 residues: Large ribosomal subunit protein bL32 (60 aa).

The segment covering 1-23 (MACPKKKTSNAKRDQRRAHWRKQ) has biased composition (basic residues). Residues 1–60 (MACPKKKTSNAKRDQRRAHWRKQAAREAQKALSLGKSVLSGRSNSFVYPTKEEEEGEDEE) are disordered.

It belongs to the bacterial ribosomal protein bL32 family.

This chain is Large ribosomal subunit protein bL32, found in Microcystis aeruginosa (strain NIES-843 / IAM M-2473).